The primary structure comprises 155 residues: E3 ubiquitin-protein ligase RHA2A (155 aa).

An RING-type; atypical zinc finger spans residues 86-128; that stretch reads CVVCLSKLKEGEEVRKLECRHVFHKKCLEGWLHQFNFTCPLCR.

Interacts with NAC019 and NAC055. In terms of tissue distribution, expressed in stems, flowers, cauline leaves, rosettes, siliques, seeds and roots.

Its subcellular location is the cytoplasm. The protein localises to the nucleus. It carries out the reaction S-ubiquitinyl-[E2 ubiquitin-conjugating enzyme]-L-cysteine + [acceptor protein]-L-lysine = [E2 ubiquitin-conjugating enzyme]-L-cysteine + N(6)-ubiquitinyl-[acceptor protein]-L-lysine.. The protein operates within protein modification; protein ubiquitination. In terms of biological role, E3 ubiquitin-protein ligase involved in the positive regulation of abscisic acid (ABA) signaling and responses to salt and osmotic stresses during seed germination and early seedling development. Acts additively with RHA2B in regulating ABA signaling and drought response. Possesses E3 ubiquitin ligase activity in vitro. The sequence is that of E3 ubiquitin-protein ligase RHA2A from Arabidopsis thaliana (Mouse-ear cress).